The sequence spans 117 residues: uncharacterized protein (117 aa).

Positions 1 to 24 are cleaved as a signal peptide; that stretch reads MMTEFGSAMTLVTGLVAYGAYVKS. The segment at 42–117 is disordered; sequence EKENFNYNNN…NNQIKRRLFD (76 aa). The span at 46–95 shows a compositional bias: low complexity; the sequence is FNYNNNNNNNNNNNNNNSNNNDNNNNNNSNSNNNNNNNNNNNNNNNNNIN. N61 and N72 each carry an N-linked (GlcNAc...) asparagine glycan. Polar residues predominate over residues 96–110; that stretch reads DKQINGTNIFDSNNQ.

The protein localises to the secreted. This is an uncharacterized protein from Dictyostelium discoideum (Social amoeba).